A 477-amino-acid polypeptide reads, in one-letter code: MANDKKLVESITSMDEDFAQWYTDVVKKAELVDYSGVRGCTIFRPAGYAIWENIQKELDARFKATGVENVYMPMFIPESLLNKEKDHVEGFAPEVAWVTHGGGEQLQERLCVRPTSETLFCDFYSHIIESYRDLPKLYNQWCSVVRWEKTTRPFLRTLEFLWQEGHTAHATAEEAEERTIQMLNLYADFCEEVLAIPMVRGRKTDKEKFAGAEATYTIEALMHDGKALQSGTSHNFGDGFAKAFNIQYTDKENKLQYVHQTSWGMTTRLIGALIMVHGDNSGLVLPPRIAPTQVVIVPIMQKKEGVLEKAAELREKLGAFRVKVDDSDKSPGWKFSEHEMRGIPVRVEIGPKDIEANQAVLVRRDTREKTVVSLDEIDTKIGEILEAMQKEMLERARNHRDAHTYEAHSTEEFADVVANKPGFVKAMWCGERACEDEIKEKTGATSRCMPFAQEHIADTCVCCGKQAKSLVYWGKAY.

The protein belongs to the class-II aminoacyl-tRNA synthetase family. ProS type 3 subfamily. As to quaternary structure, homodimer.

It localises to the cytoplasm. It carries out the reaction tRNA(Pro) + L-proline + ATP = L-prolyl-tRNA(Pro) + AMP + diphosphate. Catalyzes the attachment of proline to tRNA(Pro) in a two-step reaction: proline is first activated by ATP to form Pro-AMP and then transferred to the acceptor end of tRNA(Pro). This Lachnoclostridium phytofermentans (strain ATCC 700394 / DSM 18823 / ISDg) (Clostridium phytofermentans) protein is Proline--tRNA ligase.